The sequence spans 524 residues: Keratin, type II cytoskeletal 71 (524 aa).

Positions 1–130 are head; that stretch reads MSRQFTCKSG…DPEIQKVRAQ (130 aa). The segment at 131–166 is coil 1A; the sequence is EREQIKALNNKFASFIDKVRFLEQQNQVLQTKWELL. An IF rod domain is found at 131-444; the sequence is EREQIKALNN…KLLESEECRM (314 aa). Residues 167–185 are linker 1; it reads QQLDLNNCKNNLEPILEGH. The tract at residues 186–277 is coil 1B; that stretch reads ISNMRKQLET…CLFEAEMAQI (92 aa). The tract at residues 278 to 301 is linker 12; that stretch reads QSHISDMSVILSMDNNRNLDLDSI. Positions 302 to 440 are coil 2; it reads IDEVRAQYEE…ATYRKLLESE (139 aa). The tract at residues 441 to 524 is tail; the sequence is ECRMSGEYSS…LSTPSKKGGR (84 aa). Positions 493–524 are disordered; that stretch reads GGENRSRGSASDYKDTLTKGSSLSTPSKKGGR. Residues 494-509 are compositionally biased toward basic and acidic residues; sequence GENRSRGSASDYKDTL. Positions 510–524 are enriched in polar residues; the sequence is TKGSSLSTPSKKGGR.

The protein belongs to the intermediate filament family. As to quaternary structure, heterodimer of a type I and a type II keratin. Associates with KRT16 and/or KRT17. Specifically expressed in the inner root sheath (IRS) of the hair follicle. Present in Henle and the Huxley layers of the IRS, while expression in the cuticle is unsure (at protein level).

The protein localises to the cytoplasm. The protein resides in the cytoskeleton. In terms of biological role, plays a central role in hair formation. Essential component of keratin intermediate filaments in the inner root sheath (IRS) of the hair follicle. This chain is Keratin, type II cytoskeletal 71 (Krt71), found in Mus musculus (Mouse).